A 539-amino-acid chain; its full sequence is AT-rich interactive domain-containing protein 3A (539 aa).

Positions 1–190 (MKLQAVMETL…PLSGHPQLQD (190 aa)) are disordered. Residues 55-73 (LKIQRAQAAALAAMRAAAA) are compositionally biased toward low complexity. Positions 84–100 (SEEEDGESMASDEEDEK) are enriched in acidic residues. A compositionally biased stretch (basic and acidic residues) spans 101 to 110 (ERDGESERYQ). Residues 113–141 (ASEEEDLKGKWDEDDFEDEGEDEYEDMEE) show a composition bias toward acidic residues. Residues 161-173 (HSSQQAFPSQRSQ) show a composition bias toward polar residues. An ARID domain is found at 209-301 (DPKRKEFLDD…YLYPYECEKR (93 aa)). The 96-residue stretch at 404–499 (AALEQLREKL…GVLFAQPPTS (96 aa)) folds into the REKLES domain. An important for nuclear localization region spans residues 405-448 (ALEQLREKLESGEPPEKKMALGSEEQQRIIQRTIQHNLLAMTAQ). The segment at 450 to 471 (PMNIRINSQAEGRQDSAVNLTT) is homodimerization. Residues 495-502 (QPPTSASG) form an important for cytoplasmic localization region. Residues 497-512 (PTSASGTSKGSSNRTG) are compositionally biased toward polar residues. The interval 497 to 539 (PTSASGTSKGSSNRTGSIGGGSSNSQAAPPSTPSAPNSNNPSP) is disordered. Residues 519-539 (SNSQAAPPSTPSAPNSNNPSP) are compositionally biased toward low complexity.

As to quaternary structure, homodimer.

The protein localises to the nucleus. It localises to the cytoplasm. Its function is as follows. Transcription factor required for smad1 and smad2-mediated responses to TGFbeta during mesoderm induction. The chain is AT-rich interactive domain-containing protein 3A (arid3a) from Xenopus laevis (African clawed frog).